Here is a 535-residue protein sequence, read N- to C-terminus: Dipeptide-binding protein (535 aa).

An N-terminal signal peptide occupies residues Met1–Ala28. A disulfide bond links Cys34 and Cys262. Glycyl-L-leucine contacts are provided by residues Thr48–Gly50, Arg383–Tyr385, and Trp433–Asp436. An intrachain disulfide couples Cys450 to Cys463.

Belongs to the bacterial solute-binding protein 5 family. As to quaternary structure, the complex is composed of two ATP-binding proteins (DppD and DppF), two transmembrane proteins (DppB and DppC) and a solute-binding protein (DppA).

The protein localises to the periplasm. With respect to regulation, heme binding is inhibited by dipeptide. Its function is as follows. Part of the ABC transporter DppABCDF involved in dipeptide transport. Binds dipeptides and accepts a wide range of side chains, including small neutral, bulky hydrophobic, and positively and negatively charged groups. Tripeptides are poor substrates. DppA alone controls the specificity of the Dpp transporter. In addition, plays a role in chemotaxis toward peptides via interaction with the chemotaxis protein Tap. Binds heme. When a foreign outer membrane heme receptor is expressed in E.coli, DppABCDF can also transport heme and its precursor, 5-aminolevulinic acid (ALA), from the periplasm into the cytoplasm. The polypeptide is Dipeptide-binding protein (Escherichia coli (strain K12)).